Reading from the N-terminus, the 76-residue chain is Kappa-actitoxin-Avd4o (76 aa).

Residues 1–19 form the signal peptide; the sequence is MNKALFLSLVVLCAAVVFA. A propeptide spanning residues 20 to 33 is cleaved from the precursor; that stretch reads AEDLQKAKHAPFKL. Intrachain disulfides connect Cys-37–Cys-72, Cys-39–Cys-65, and Cys-55–Cys-73.

It belongs to the sea anemone type 3 (BDS) potassium channel toxin family. As to expression, experimental results show no expression in the ectodermal tissue from the distal and proximal tentacles, body wall, and oral disk. Since paralogs are expressed in this tissue, an expression of this toxin in this tissue is probable. The negative results could be explained by the very low abundance of EST sequences.

The protein localises to the secreted. Its subcellular location is the nematocyst. Functionally, blocks Kv3 voltage-gated potassium channels. Reduces blood pressure. The sequence is that of Kappa-actitoxin-Avd4o from Anemonia viridis (Snakelocks anemone).